The chain runs to 448 residues: Glutamyl-tRNA reductase (448 aa).

Residues 49–52, serine 109, 114–116, and glutamine 120 contribute to the substrate site; these read TCNR and ETQ. The active-site Nucleophile is the cysteine 50. 189–194 serves as a coordination point for NADP(+); the sequence is GAGEMS.

This sequence belongs to the glutamyl-tRNA reductase family. In terms of assembly, homodimer.

The enzyme catalyses (S)-4-amino-5-oxopentanoate + tRNA(Glu) + NADP(+) = L-glutamyl-tRNA(Glu) + NADPH + H(+). It functions in the pathway porphyrin-containing compound metabolism; protoporphyrin-IX biosynthesis; 5-aminolevulinate from L-glutamyl-tRNA(Glu): step 1/2. Its function is as follows. Catalyzes the NADPH-dependent reduction of glutamyl-tRNA(Glu) to glutamate 1-semialdehyde (GSA). The polypeptide is Glutamyl-tRNA reductase (Staphylococcus aureus (strain MRSA252)).